The chain runs to 228 residues: Orotate phosphoribosyltransferase (228 aa).

A 5-phospho-alpha-D-ribose 1-diphosphate-binding site is contributed by lysine 26. Residue 34-35 coordinates orotate; the sequence is FF. Residues 72–73, arginine 98, lysine 99, lysine 102, histidine 104, and 123–131 each bind 5-phospho-alpha-D-ribose 1-diphosphate; these read YK and DDVISAGTS. Positions 127 and 155 each coordinate orotate.

Belongs to the purine/pyrimidine phosphoribosyltransferase family. PyrE subfamily. Homodimer. It depends on Mg(2+) as a cofactor.

The catalysed reaction is orotidine 5'-phosphate + diphosphate = orotate + 5-phospho-alpha-D-ribose 1-diphosphate. The protein operates within pyrimidine metabolism; UMP biosynthesis via de novo pathway; UMP from orotate: step 1/2. In terms of biological role, catalyzes the transfer of a ribosyl phosphate group from 5-phosphoribose 1-diphosphate to orotate, leading to the formation of orotidine monophosphate (OMP). The sequence is that of Orotate phosphoribosyltransferase from Nitrosospira multiformis (strain ATCC 25196 / NCIMB 11849 / C 71).